The following is an 86-amino-acid chain: Small ribosomal subunit protein uS17 (86 aa).

This sequence belongs to the universal ribosomal protein uS17 family. Part of the 30S ribosomal subunit.

Functionally, one of the primary rRNA binding proteins, it binds specifically to the 5'-end of 16S ribosomal RNA. The polypeptide is Small ribosomal subunit protein uS17 (Roseiflexus castenholzii (strain DSM 13941 / HLO8)).